A 469-amino-acid polypeptide reads, in one-letter code: Trigger factor (469 aa).

A PPIase FKBP-type domain is found at 166-245 (GDFLTIDITA…VKSVKERELP (80 aa)). Residues 430–469 (GGEEEAAEAEAAPAVDSDAVEGEAATEEAAPSDDPAAVKF) form a disordered region.

The protein belongs to the FKBP-type PPIase family. Tig subfamily.

The protein localises to the cytoplasm. It catalyses the reaction [protein]-peptidylproline (omega=180) = [protein]-peptidylproline (omega=0). Its function is as follows. Involved in protein export. Acts as a chaperone by maintaining the newly synthesized protein in an open conformation. Functions as a peptidyl-prolyl cis-trans isomerase. The protein is Trigger factor of Arthrobacter sp. (strain FB24).